Here is a 204-residue protein sequence, read N- to C-terminus: Sperm acrosome developmental regulator (204 aa).

Ser-65 is subject to Phosphoserine. Basic residues predominate over residues 172-184 (RRQERRRRHHLRA). The interval 172–204 (RRQERRRRHHLRAHMGPQPDPAQGLKQDARSPL) is disordered.

It is found in the cytoplasmic vesicle. The protein localises to the secretory vesicle. It localises to the acrosome. May play an important role in acrosome formation and nucleus shaping during spermiogenesis. The chain is Sperm acrosome developmental regulator (SPACDR) from Bos taurus (Bovine).